The following is a 52-amino-acid chain: Venom peptide 4b (52 aa).

A signal peptide spans 1–23 (MRSAILLVIVAIVAILGFLGVNA). AXPX repeat units lie at residues 23–26 (AEPL), 31–34 (AEPN), and 39–42 (AAPL). A propeptide spanning residues 24 to 41 (EPLPSPLAEPNPHAKAAP) is cleaved from the precursor. A disordered region spans residues 30–52 (LAEPNPHAKAAPLSPAAMASLAG). The segment covering 37 to 52 (AKAAPLSPAAMASLAG) has biased composition (low complexity). A51 is modified (alanine amide).

As to expression, expressed by the venom gland.

It localises to the secreted. The polypeptide is Venom peptide 4b (Eumenes pomiformis (Potter wasp)).